The sequence spans 519 residues: Na(+)/H(+) exchange regulatory cofactor NHE-RF3 (519 aa).

The PDZ 1 domain maps to 9–90 (ECKLSKQEGQ…SVTLLVLDGD (82 aa)). Phosphoserine is present on residues Ser108, Ser148, Ser192, Ser250, Ser334, and Ser348. 2 consecutive PDZ domains span residues 128 to 215 (EPCA…VDKE) and 243 to 323 (VVVI…LDKE). The disordered stretch occupies residues 348-374 (SVKEGPAPIPAPLEATGSEPTEDAEGH). The 81-residue stretch at 378–458 (LCRLLKEDDS…HVTLLVCGKM (81 aa)) folds into the PDZ 4 domain. 2 positions are modified to phosphothreonine: Thr451 and Thr488. The segment at 479–519 (VAGPDEKGETSAESEHDAHPAKDRTLSTASHSSSNSEDTEM) is disordered. Positions 482 to 503 (PDEKGETSAESEHDAHPAKDRT) are enriched in basic and acidic residues. Phosphoserine is present on residues Ser489 and Ser492. At Thr503 the chain carries Phosphothreonine. Positions 505–519 (STASHSSSNSEDTEM) are enriched in low complexity. A phosphoserine mark is found at Ser508, Ser510, Ser511, Ser512, and Ser514.

The protein belongs to the NHER family. In terms of assembly, interacts with PDZK1IP1 and ABCC2. Binds to the C-terminal region of SLC26A3. Interacts (via C-terminal PDZ domain) with SLC26A6 (via C-terminal domain). Interacts (via C-terminal PDZ domain) with SLC9A3 (via C-terminal domain). Component of a complex, composed of PDZK1, SYNGAP1, KLHL17 and NMDA receptors. Interacts (via PDZ1 domain) directly with KLHL17; the interaction is important for integrity of actin cytoskeleton structures in neurons. Forms a heterodimeric complex with NHERF1. Interacts with AKAP2, BCR, CFTR, SLCO1A1, SLC22A12, SLC22A4, SLC22A5, SLC26A6, NHERF2 and SLC17A1. Interacts (via the first PDZ domain) with PTGIR (via non-isoprenylated C-terminus). Interacts (via PDZ domains 1 and 3) with SCARB1 (C-terminal domain). Interacts (via PDZ domains 1 and 3) with SLC5A8 (via PDZ-binding motif); interaction increases nicotinate transport activity of SLC5A8. In terms of tissue distribution, expressed in kidney, liver, small intestine. brain, lung, and testis (at protein level).

It localises to the membrane. It is found in the cell membrane. In terms of biological role, a scaffold protein that connects plasma membrane proteins and regulatory components, regulating their surface expression in epithelial cells apical domains. May be involved in the coordination of a diverse range of regulatory processes for ion transport and second messenger cascades. In complex with NHERF1, may cluster proteins that are functionally dependent in a mutual fashion and modulate the trafficking and the activity of the associated membrane proteins. May play a role in the cellular mechanisms associated with multidrug resistance through its interaction with ABCC2 and PDZK1IP1. May potentiate the CFTR chloride channel activity. Required for normal cell-surface expression of SCARB1. Plays a role in maintaining normal plasma cholesterol levels via its effects on SCARB1. Plays a role in the normal localization and function of the chloride-anion exchanger SLC26A6 to the plasma membrane in the brush border of the proximal tubule of the kidney. May be involved in the regulation of proximal tubular Na(+)-dependent inorganic phosphate cotransport therefore playing an important role in tubule function. This Mus musculus (Mouse) protein is Na(+)/H(+) exchange regulatory cofactor NHE-RF3 (Pdzk1).